A 363-amino-acid chain; its full sequence is MSMTTKHNWTKDEIIAIYNKPLMDLLYEAATIHRQQHDPNVVQVSTLLSIKTGGCPEDCGYCPQAARYNTGVEGNDLMTVSQVKAQALRAKSNGSSRVCMGAAWRNVKDGEEFDQVLEMVRTINKLDMEVCCTLGMLTENQAQRLAEAGLYAYNHNLDTSEEYYKDVISTRGFEDRLQTIENVRKTNVTVCSGGIIGMGESIEDRAGMLVALSTLNPQPESVPINALVAVEGTPMEEEKPVEIWEMIRMVATTRIVMPETQVRLSAGRTNMSREGQAMCFFAGANSIFAGDKLLTTPNPDVNEDMKMFETLGMVAQKPFIKIMQPKTVEAADSQFAPLGEKPKWSRPGHTIERNIEASIKSKI.

Residues 40 to 268 (NVVQVSTLLS…ETQVRLSAGR (229 aa)) form the Radical SAM core domain. Residues Cys55, Cys59, and Cys62 each contribute to the [4Fe-4S] cluster site. 4 residues coordinate [2Fe-2S] cluster: Cys99, Cys131, Cys191, and Arg263.

Belongs to the radical SAM superfamily. Biotin synthase family. In terms of assembly, homodimer. The cofactor is [4Fe-4S] cluster. [2Fe-2S] cluster is required as a cofactor.

It catalyses the reaction (4R,5S)-dethiobiotin + (sulfur carrier)-SH + 2 reduced [2Fe-2S]-[ferredoxin] + 2 S-adenosyl-L-methionine = (sulfur carrier)-H + biotin + 2 5'-deoxyadenosine + 2 L-methionine + 2 oxidized [2Fe-2S]-[ferredoxin]. The protein operates within cofactor biosynthesis; biotin biosynthesis; biotin from 7,8-diaminononanoate: step 2/2. Functionally, catalyzes the conversion of dethiobiotin (DTB) to biotin by the insertion of a sulfur atom into dethiobiotin via a radical-based mechanism. The polypeptide is Biotin synthase (Flavobacterium johnsoniae (strain ATCC 17061 / DSM 2064 / JCM 8514 / BCRC 14874 / CCUG 350202 / NBRC 14942 / NCIMB 11054 / UW101) (Cytophaga johnsonae)).